We begin with the raw amino-acid sequence, 358 residues long: MTQLFPGPIVRTPGLAELDARARDIFRRVVESYLETGEPVGSRTISKGGVALSPASIRNTMQDLAQLGLLDAPHTSAGRMPTHAGLRMFVDGFLEVGDVAEQEKRAIEARLAVKGRSFEEALAEASSILSGLAGGAGIVVTPVREGGVKHVEFVPLGGGQVLAVMVFEDGQVENRLMRQAPGVTPSALQEASNFLNARLRGRTLTEARTEMGGELDAARRQLNETAARLVEDGLAAWSGGEGDARSLIVRGQANLLADARAREDIDRVRQLFDDLEQKGQLIGLLDDVRDAEGVRIYIGAETRLFSLSGSSVIAAPYMTGRQKVLGAIGVIGPARLNYARVIPLVDYTARVLGRMMDG.

The protein belongs to the HrcA family.

Its function is as follows. Negative regulator of class I heat shock genes (grpE-dnaK-dnaJ and groELS operons). Prevents heat-shock induction of these operons. The polypeptide is Heat-inducible transcription repressor HrcA (Caulobacter vibrioides (strain NA1000 / CB15N) (Caulobacter crescentus)).